We begin with the raw amino-acid sequence, 230 residues long: Large ribosomal subunit protein uL1 (230 aa).

It belongs to the universal ribosomal protein uL1 family. Part of the 50S ribosomal subunit.

Binds directly to 23S rRNA. The L1 stalk is quite mobile in the ribosome, and is involved in E site tRNA release. Functionally, protein L1 is also a translational repressor protein, it controls the translation of the L11 operon by binding to its mRNA. In Bacillus cereus (strain G9842), this protein is Large ribosomal subunit protein uL1.